The chain runs to 251 residues: uncharacterized protein (251 aa).

36–43 is a binding site for ATP; it reads GKQGTGKT. The segment at 230-251 is disordered; it reads SDNKTENPSNPSLLTKIDDVTR.

Its function is as follows. This protein may be involved in virus assembly. Essential for virus function. This is an uncharacterized protein from Sulfolobus spindle-shape virus 1 (SSV1).